A 173-amino-acid polypeptide reads, in one-letter code: Ferritin heavy chain (173 aa).

One can recognise a Ferritin-like diiron domain in the interval 6–155; that stretch reads QNFHEECERG…GYVTNLKRCG (150 aa). Positions 23, 58, 61, 103, and 137 each coordinate Fe cation.

The protein belongs to the ferritin family. As to quaternary structure, oligomer of 24 subunits. There are two types of subunits: L (light) chain and H (heavy) chain. The functional molecule is roughly spherical and contains a central cavity into which the insoluble mineral iron core is deposited.

Its subcellular location is the cytoplasm. The catalysed reaction is 4 Fe(2+) + O2 + 4 H(+) = 4 Fe(3+) + 2 H2O. Its function is as follows. Stores iron in a soluble, non-toxic, readily available form. Important for iron homeostasis. Has ferroxidase activity. Iron is taken up in the ferrous form and deposited as ferric hydroxides after oxidation. The protein is Ferritin heavy chain of Echinococcus granulosus (Hydatid tapeworm).